The following is a 302-amino-acid chain: Phosphoribosylaminoimidazole-succinocarboxamide synthase (302 aa).

The protein belongs to the SAICAR synthetase family.

It carries out the reaction 5-amino-1-(5-phospho-D-ribosyl)imidazole-4-carboxylate + L-aspartate + ATP = (2S)-2-[5-amino-1-(5-phospho-beta-D-ribosyl)imidazole-4-carboxamido]succinate + ADP + phosphate + 2 H(+). Its pathway is purine metabolism; IMP biosynthesis via de novo pathway; 5-amino-1-(5-phospho-D-ribosyl)imidazole-4-carboxamide from 5-amino-1-(5-phospho-D-ribosyl)imidazole-4-carboxylate: step 1/2. The chain is Phosphoribosylaminoimidazole-succinocarboxamide synthase from Ralstonia nicotianae (strain ATCC BAA-1114 / GMI1000) (Ralstonia solanacearum).